A 236-amino-acid chain; its full sequence is Probable ascorbate-specific transmembrane electron transporter 2 (236 aa).

The Cytoplasmic portion of the chain corresponds to M1–P11. The helical transmembrane segment at F12–I32 threads the bilayer. The region spanning V15–V219 is the Cytochrome b561 domain. Over S33–P53 the chain is Extracellular. H52 contacts heme b. A helical transmembrane segment spans residues V54–F74. Position 67-75 (A67–P75) interacts with L-ascorbate. The Cytoplasmic segment spans residues P75–L84. The helical transmembrane segment at I85–F105 threads the bilayer. Residues H86 and H120 each contribute to the heme b site. The Extracellular segment spans residues K106–W122. Monodehydro-L-ascorbate radical is bound at residue L116–I125. The chain crosses the membrane as a helical span at residues L123 to F143. At Y144–R153 the chain is on the cytoplasmic side. The helical transmembrane segment at G154–A174 threads the bilayer. H159 contributes to the heme b binding site. Over E175 to E196 the chain is Extracellular. A helical transmembrane segment spans residues A197–A217. Residues A218–N236 are Cytoplasmic-facing.

The cofactor is heme b.

The protein localises to the membrane. Functionally, two-heme-containing cytochrome. Catalyzes ascorbate-dependent trans-membrane electron transfer by utilizing a concerted H(+)/e(-) transfer mechanism. This is Probable ascorbate-specific transmembrane electron transporter 2 from Oryza sativa subsp. japonica (Rice).